The chain runs to 721 residues: Polyribonucleotide nucleotidyltransferase (721 aa).

Mg(2+) contacts are provided by D495 and D501. The region spanning 562-621 (PRLLSFRIDPELIGTVIGPGGRTIKGITERTNTKIDIEDGGIVTIASHDGAAAEEAQKII) is the KH domain. The region spanning 631–699 (GEIFPGVVTR…SRGRINLTLR (69 aa)) is the S1 motif domain.

This sequence belongs to the polyribonucleotide nucleotidyltransferase family. It depends on Mg(2+) as a cofactor.

Its subcellular location is the cytoplasm. The enzyme catalyses RNA(n+1) + phosphate = RNA(n) + a ribonucleoside 5'-diphosphate. Its function is as follows. Involved in mRNA degradation. Catalyzes the phosphorolysis of single-stranded polyribonucleotides processively in the 3'- to 5'-direction. The sequence is that of Polyribonucleotide nucleotidyltransferase from Prochlorococcus marinus subsp. pastoris (strain CCMP1986 / NIES-2087 / MED4).